Consider the following 263-residue polypeptide: MNHIKDTLKIGSHTFASRLIVGSGKYKDFATTKEATLASGAEIITVAVRRVNIMDNKSENLLETFKDTNIQFLPNSAGCVNAKEAITLFRLVREATGIDFIKLEIIGDIDKTLYPDVIESLQATEILANEGFCVLAYTNDDPIMAKRLENAGASAIMPLAAPIGSGLGIQNRYNIGFIKEAVKVPVIVDAGVGCASDASIAMELGADAVLTNTAIAQAQNPVTMAEAMKYAVKAGRLSYLAGRIPRKAYASASSPLEGMMQFG.

Residue K102 is the Schiff-base intermediate with DXP of the active site. 1-deoxy-D-xylulose 5-phosphate-binding positions include G164, 190–191 (AG), and 212–213 (NT).

This sequence belongs to the ThiG family. In terms of assembly, homotetramer. Forms heterodimers with either ThiH or ThiS.

Its subcellular location is the cytoplasm. It carries out the reaction [ThiS sulfur-carrier protein]-C-terminal-Gly-aminoethanethioate + 2-iminoacetate + 1-deoxy-D-xylulose 5-phosphate = [ThiS sulfur-carrier protein]-C-terminal Gly-Gly + 2-[(2R,5Z)-2-carboxy-4-methylthiazol-5(2H)-ylidene]ethyl phosphate + 2 H2O + H(+). The protein operates within cofactor biosynthesis; thiamine diphosphate biosynthesis. In terms of biological role, catalyzes the rearrangement of 1-deoxy-D-xylulose 5-phosphate (DXP) to produce the thiazole phosphate moiety of thiamine. Sulfur is provided by the thiocarboxylate moiety of the carrier protein ThiS. In vitro, sulfur can be provided by H(2)S. The protein is Thiazole synthase of Helicobacter hepaticus (strain ATCC 51449 / 3B1).